The chain runs to 1020 residues: Protein CLASP-2 (1020 aa).

A compositionally biased stretch (low complexity) spans Ala-259–Ser-271. Disordered regions lie at residues Ala-259–Ser-280, Pro-329–Ala-387, and Leu-419–Thr-461. The span at Pro-329–Gly-343 shows a compositional bias: polar residues. Residues Ser-372–Pro-381 show a composition bias toward low complexity. The span at Gln-450–Asp-460 shows a compositional bias: polar residues. The HEAT repeat unit spans residues Leu-954 to His-992.

Belongs to the CLASP family. In terms of assembly, interacts with hcp-1 and hcp-2.

It localises to the cytoplasm. The protein localises to the cytoskeleton. It is found in the microtubule organizing center. The protein resides in the centrosome. Its subcellular location is the chromosome. It localises to the centromere. The protein localises to the kinetochore. It is found in the spindle. Its function is as follows. Probable microtubule plus-end tracking protein that promotes the stabilization of dynamic microtubules. Required for the formation of mitotic and meiotic spindles. Specifically promotes the polymerization of kinetochore-bound microtubules. Also required for cytoplasmic streaming. Essential for embryonic development. In Caenorhabditis elegans, this protein is Protein CLASP-2 (cls-2).